Consider the following 467-residue polypeptide: Probable glutamate decarboxylase gamma (467 aa).

The residue at position 278 (Lys-278) is an N6-(pyridoxal phosphate)lysine.

The protein belongs to the group II decarboxylase family. The cofactor is pyridoxal 5'-phosphate.

It carries out the reaction L-glutamate + H(+) = 4-aminobutanoate + CO2. The chain is Probable glutamate decarboxylase gamma from Listeria innocua serovar 6a (strain ATCC BAA-680 / CLIP 11262).